Here is a 302-residue protein sequence, read N- to C-terminus: Short-chain dehydrogenase/reductase 3 (302 aa).

4 helical membrane-spanning segments follow: residues 9–29 (LVVFPLQMIYLVVKAAVGLVL), 170–190 (IVCLNSVLALSAIPGAIDYCT), 195–215 (AFAFMESLTLGLLDCPGVSAT), and 253–273 (AVQLNQALLLLPWTMHALIIL). Substrate is bound at residue serine 175. Residue tyrosine 188 is the Proton acceptor of the active site.

This sequence belongs to the short-chain dehydrogenases/reductases (SDR) family. In the retina, expressed in cone but not rod outer segments.

The protein resides in the membrane. It catalyses the reaction all-trans-retinol + NADP(+) = all-trans-retinal + NADPH + H(+). Its function is as follows. Catalyzes the reduction of all-trans-retinal to all-trans-retinol in the presence of NADPH. The protein is Short-chain dehydrogenase/reductase 3 (DHRS3) of Bos taurus (Bovine).